The following is a 97-amino-acid chain: MLATRVFNLIGRRAISTSVCVRAHGSXVKSEDYALPVYVDRRDYPLPDVAHVKNLSASQKAXKEKEKASWSSLSMDEKVELYRLKFNESFAEMNRST.

The N-terminal 22 residues, 1 to 22 (MLATRVFNLIGRRAISTSVCVR), are a transit peptide targeting the mitochondrion. Lys-29 carries the post-translational modification N6-acetyllysine; alternate. Residue Lys-29 is modified to N6-succinyllysine; alternate. Lys-53 carries the N6-acetyllysine modification. A phosphoserine mark is found at Ser-56 and Ser-58. N6-acetyllysine; alternate is present on Lys-60. Position 60 is an N6-succinyllysine; alternate (Lys-60). Lys-67 carries the N6-acetyllysine modification.

Belongs to the cytochrome c oxidase IV family. Component of the cytochrome c oxidase (complex IV, CIV), a multisubunit enzyme composed of 14 subunits. The complex is composed of a catalytic core of 3 subunits MT-CO1, MT-CO2 and MT-CO3, encoded in the mitochondrial DNA, and 11 supernumerary subunits COX4I, COX5A, COX5B, COX6A, COX6B, COX6C, COX7A, COX7B, COX7C, COX8 and NDUFA4, which are encoded in the nuclear genome. The complex exists as a monomer or a dimer and forms supercomplexes (SCs) in the inner mitochondrial membrane with NADH-ubiquinone oxidoreductase (complex I, CI) and ubiquinol-cytochrome c oxidoreductase (cytochrome b-c1 complex, complex III, CIII), resulting in different assemblies (supercomplex SCI(1)III(2)IV(1) and megacomplex MCI(2)III(2)IV(2)). Interacts with PHB2; the interaction decreases in absence of SPHK2. Interacts with AFG1L. Interacts with ABCB7; this interaction allows the regulation of cellular iron homeostasis and cellular reactive oxygen species (ROS) levels in cardiomyocytes. Interacts with FLVCR2; this interaction occurs in the absence of heme and is disrupted upon heme binding. Interacts with IRGC.

It is found in the mitochondrion inner membrane. It participates in energy metabolism; oxidative phosphorylation. Functionally, component of the cytochrome c oxidase, the last enzyme in the mitochondrial electron transport chain which drives oxidative phosphorylation. The respiratory chain contains 3 multisubunit complexes succinate dehydrogenase (complex II, CII), ubiquinol-cytochrome c oxidoreductase (cytochrome b-c1 complex, complex III, CIII) and cytochrome c oxidase (complex IV, CIV), that cooperate to transfer electrons derived from NADH and succinate to molecular oxygen, creating an electrochemical gradient over the inner membrane that drives transmembrane transport and the ATP synthase. Cytochrome c oxidase is the component of the respiratory chain that catalyzes the reduction of oxygen to water. Electrons originating from reduced cytochrome c in the intermembrane space (IMS) are transferred via the dinuclear copper A center (CU(A)) of subunit 2 and heme A of subunit 1 to the active site in subunit 1, a binuclear center (BNC) formed by heme A3 and copper B (CU(B)). The BNC reduces molecular oxygen to 2 water molecules using 4 electrons from cytochrome c in the IMS and 4 protons from the mitochondrial matrix. The chain is Cytochrome c oxidase subunit 4 isoform 1, mitochondrial (COX4I1) from Sus scrofa (Pig).